Reading from the N-terminus, the 151-residue chain is UPF0178 protein GSU0171 (151 aa).

The protein belongs to the UPF0178 family.

This is UPF0178 protein GSU0171 from Geobacter sulfurreducens (strain ATCC 51573 / DSM 12127 / PCA).